Reading from the N-terminus, the 271-residue chain is Phosphate import ATP-binding protein PstB 2 (271 aa).

Residues 25–266 enclose the ABC transporter domain; that stretch reads MATEDLHVYY…PQEKQTEDYI (242 aa). 57-64 lines the ATP pocket; that stretch reads GPSGCGKS.

This sequence belongs to the ABC transporter superfamily. Phosphate importer (TC 3.A.1.7) family. The complex is composed of two ATP-binding proteins (PstB), two transmembrane proteins (PstC and PstA) and a solute-binding protein (PstS).

The protein localises to the cell membrane. The catalysed reaction is phosphate(out) + ATP + H2O = ADP + 2 phosphate(in) + H(+). In terms of biological role, part of the ABC transporter complex PstSACB involved in phosphate import. Responsible for energy coupling to the transport system. This Listeria monocytogenes serovar 1/2a (strain ATCC BAA-679 / EGD-e) protein is Phosphate import ATP-binding protein PstB 2.